Consider the following 88-residue polypeptide: Cell division topological specificity factor (88 aa).

This sequence belongs to the MinE family.

Prevents the cell division inhibition by proteins MinC and MinD at internal division sites while permitting inhibition at polar sites. This ensures cell division at the proper site by restricting the formation of a division septum at the midpoint of the long axis of the cell. In Herminiimonas arsenicoxydans, this protein is Cell division topological specificity factor.